Consider the following 678-residue polypeptide: NADPH--cytochrome P450 reductase (678 aa).

N-acetylglycine is present on glycine 2. The Lumenal segment spans residues 2-22; the sequence is GDSHEDTSATMPEAVAEEVSL. Residues 23–43 traverse the membrane as a helical segment; that stretch reads FSTTDMVLFSLIVGVLTYWFI. Over 44-678 the chain is Cytoplasmic; that stretch reads FRKKKEEIPE…KGRYSLDVWS (635 aa). A Flavodoxin-like domain is found at 80 to 224; it reads IIVFYGSQTG…DFITWREQFW (145 aa). FMN is bound by residues 86 to 91, 138 to 141, 173 to 182, and aspartate 208; these read SQTGTA, ATYG, and LGNKTYEHFN. Positions 279–521 constitute an FAD-binding FR-type domain; sequence KNPFLAAVTA…FVRKSQFRLP (243 aa). NADP(+) is bound at residue arginine 298. Residues arginine 424, 454-457, 472-474, tyrosine 478, and 488-491 each bind FAD; these read RYYS, CAV, and GVAT. Residues threonine 535, 596–597, 602–606, and aspartate 639 each bind NADP(+); these read SR and KVYVQ. Tryptophan 677 is an FAD binding site.

This sequence belongs to the NADPH--cytochrome P450 reductase family. It in the N-terminal section; belongs to the flavodoxin family. The protein in the C-terminal section; belongs to the flavoprotein pyridine nucleotide cytochrome reductase family. The cofactor is FAD. Requires FMN as cofactor.

It is found in the endoplasmic reticulum membrane. It catalyses the reaction 2 oxidized [cytochrome P450] + NADPH = 2 reduced [cytochrome P450] + NADP(+) + H(+). Its function is as follows. This enzyme is required for electron transfer from NADP to cytochrome P450 in microsomes. It can also provide electron transfer to heme oxygenase and cytochrome B5. In Rattus norvegicus (Rat), this protein is NADPH--cytochrome P450 reductase.